The chain runs to 401 residues: Zinc finger CCHC domain-containing protein 12 (401 aa).

Disordered stretches follow at residues 1-20 (MASI…PLPP) and 270-292 (DSDE…SAGP). Positions 270-282 (DSDEDVILVEPDD) are enriched in acidic residues. The CCHC-type zinc-finger motif lies at 345-362 (VHCSHCGEEGHSKETCDN).

This sequence belongs to the ZCCHC12 family. As to quaternary structure, interacts with SMAD1 and CREB-binding protein (CBP). Forms a protein-DNA complex through its association with SMAD1.

Its function is as follows. Transcriptional coactivator in the bone morphogenetic protein (BMP)-signaling pathway. It positively modulates BMP signaling by interacting with SMAD1 and associating with CBP in the transcription complex. It contributes to the BMP-induced enhancement of cholinergic-neuron-specific gene expression. This chain is Zinc finger CCHC domain-containing protein 12 (Zcchc12), found in Rattus norvegicus (Rat).